The sequence spans 695 residues: Calcium-dependent serine proteinase (695 aa).

The signal sequence occupies residues 1 to 21 (MGKSSEAWCIVLFSVFASFSA). The CUB 1 domain occupies 22-136 (EPTMHGEILS…TGFAAYYAAI (115 aa)). 4 disulfides stabilise this stretch: Cys-71–Cys-89, Cys-141–Cys-153, Cys-149–Cys-162, and Cys-164–Cys-177. Positions 137 to 178 (DVNECTDFTDVPCSHFCNNFIGGYFCSCPPEYFLHDDMRNCG) constitute an EGF-like; calcium-binding domain. A (3R)-3-hydroxyasparagine modification is found at Asn-155. Asn-180 is a glycosylation site (N-linked (GlcNAc...) asparagine). 6 cysteine pairs are disulfide-bonded: Cys-181–Cys-208, Cys-240–Cys-257, Cys-300–Cys-347, Cys-327–Cys-360, Cys-365–Cys-410, and Cys-392–Cys-428. The CUB 2 domain maps to 181-296 (CSGNVFTALI…KGWKLRYHGD (116 aa)). 2 consecutive Sushi domains span residues 298–362 (IPCP…RCQP) and 363–430 (VDCG…KCVP). Asn-413 carries N-linked (GlcNAc...) asparagine glycosylation. The Peptidase S1 domain maps to 445–687 (IFGGFPAKIQ…YKDWILQTMQ (243 aa)). Active-site charge relay system residues include His-482 and Asp-536. 2 disulfides stabilise this stretch: Cys-602–Cys-625 and Cys-634–Cys-666. The active-site Charge relay system is Ser-638.

The protein belongs to the peptidase S1 family. In terms of assembly, heterodimer, consisting of heavy and light chains with disulfide bonds. The heavy chain is expected to be a regulatory subunit and the light chain contains the catalytic site. Post-translationally, the iron and 2-oxoglutarate dependent 3-hydroxylation of aspartate and asparagine is (R) stereospecific within EGF domains.

Its subcellular location is the secreted. The protein localises to the extracellular space. It is found in the extracellular matrix. Functionally, capable of degrading extracellular matrix proteins. CASP degrades type I and IV collagen and fibronectin in the presence of calcium. The chain is Calcium-dependent serine proteinase from Mesocricetus auratus (Golden hamster).